Here is a 32-residue protein sequence, read N- to C-terminus: MSDIN-like toxin proprotein 3 (32 aa).

The propeptide occupies 1–10; sequence MSDINATRLP. Residues 11 to 17 constitute a cross-link (cyclopeptide (Val-Pro)); sequence VWIGYSP. Residues 18–32 constitute a propeptide that is removed on maturation; that stretch reads CVGDDAVALLNRGEG.

It belongs to the MSDIN fungal toxin family. In terms of processing, processed by the macrocyclase-peptidase enzyme POPB to yield a toxic cyclic heptapeptide. POPB first removes 10 residues from the N-terminus. Conformational trapping of the remaining peptide forces the enzyme to release this intermediate rather than proceed to macrocyclization. The enzyme rebinds the remaining peptide in a different conformation and catalyzes macrocyclization of the N-terminal 7 residues.

Functionally, probable toxin that belongs to the MSDIN-like toxin family responsible for a large number of food poisoning cases and deaths. The sequence is that of MSDIN-like toxin proprotein 3 from Amanita fuligineoides.